Consider the following 2410-residue polypeptide: Cell wall alpha-1,3-glucan synthase ags1 (2410 aa).

Phosphoserine occurs at positions 1643, 1644, and 1651. A Phosphothreonine modification is found at threonine 1653. Residues serine 1685 to leucine 1706 form a disordered region. Serine 1738 and serine 1812 each carry phosphoserine. Residues glutamine 1796–arginine 1827 are disordered. Positions proline 1802–arginine 1827 are enriched in low complexity.

The protein belongs to the glycosyltransferase group 1 family. In terms of assembly, interacts with sad1.

It catalyses the reaction [(1-&gt;3)-alpha-D-glucosyl](n) + UDP-alpha-D-glucose = [(1-&gt;3)-alpha-D-glucosyl](n+1) + UDP + H(+). In terms of biological role, required for alpha-1,3-glucan and alpha-1,4-glucan production which are required for cell wall synthesis. The sequence is that of Cell wall alpha-1,3-glucan synthase ags1 (ags1) from Schizosaccharomyces pombe (strain 972 / ATCC 24843) (Fission yeast).